A 100-amino-acid polypeptide reads, in one-letter code: Serine protease inhibitor 1 protein (100 aa).

Positions 1 to 20 (MKHLLIVSLVFVTIIWKIEC) are cleaved as a signal peptide. 5 cysteine pairs are disulfide-bonded: C42-C74, C51-C69, C54-C65, C58-C93, and C76-C90. A TIL domain is found at 42–93 (CGLNEVWMVCSSCEEECGKTPQPCPRICQPARCQCPAHKGYRRDGQGNCIFC).

The protein localises to the secreted. The polypeptide is Serine protease inhibitor 1 protein (Caenorhabditis elegans).